The primary structure comprises 472 residues: ATP synthase subunit beta (472 aa).

An ATP-binding site is contributed by 150–157; that stretch reads GGAGVGKT.

Belongs to the ATPase alpha/beta chains family. As to quaternary structure, F-type ATPases have 2 components, CF(1) - the catalytic core - and CF(0) - the membrane proton channel. CF(1) has five subunits: alpha(3), beta(3), gamma(1), delta(1), epsilon(1). CF(0) has four main subunits: a, b, b' and c.

Its subcellular location is the cellular chromatophore membrane. The catalysed reaction is ATP + H2O + 4 H(+)(in) = ADP + phosphate + 5 H(+)(out). Produces ATP from ADP in the presence of a proton gradient across the membrane. The catalytic sites are hosted primarily by the beta subunits. The polypeptide is ATP synthase subunit beta (Rhodobacter capsulatus (Rhodopseudomonas capsulata)).